Here is a 253-residue protein sequence, read N- to C-terminus: MEHAAFVHNEEQYIVHNPKEVTQIINDLIKHKSMIKVTFNHGADVYLTSIISIDAKTGAVYLDVGVDDEFNRRLLASNHVVFIKEDGVKIKWTSAHIAGVELKDGKAIKIALPKDMVRLQRRDFYRFATPVANPVVCKIPVPDVLNPAEETILELSLVDVSLGGIGTLVAAPLNPALVLGQAFNGCKIGFPDVGETNLTLKVKNITEIHVQDVMTKYRVGFEYVEPSRGNEGLINRYVYILERQAIALAHGAA.

Residues 120 to 239 form the PilZ domain; it reads QRRDFYRFAT…NEGLINRYVY (120 aa).

Belongs to the YcgR family. Monomer. Interacts with the flagellar basal bodies.

It is found in the bacterial flagellum basal body. Its function is as follows. Acts as a flagellar brake, regulating swimming and swarming in a bis-(3'-5') cyclic diguanylic acid (c-di-GMP)-dependent manner. Binds 1 c-di-GMP dimer per subunit. Increasing levels of c-di-GMP lead to decreased motility. In Methylotenera mobilis (strain JLW8 / ATCC BAA-1282 / DSM 17540), this protein is Flagellar brake protein YcgR.